Reading from the N-terminus, the 359-residue chain is Protein RecA (359 aa).

69-76 lines the ATP pocket; that stretch reads GPESSGKT. A disordered region spans residues 337–359; the sequence is SANSVAKASEEDEEEEVDLEPEE. Residues 346-359 are compositionally biased toward acidic residues; it reads EEDEEEEVDLEPEE.

This sequence belongs to the RecA family.

The protein resides in the cytoplasm. Its function is as follows. Can catalyze the hydrolysis of ATP in the presence of single-stranded DNA, the ATP-dependent uptake of single-stranded DNA by duplex DNA, and the ATP-dependent hybridization of homologous single-stranded DNAs. It interacts with LexA causing its activation and leading to its autocatalytic cleavage. This chain is Protein RecA, found in Nostoc punctiforme (strain ATCC 29133 / PCC 73102).